We begin with the raw amino-acid sequence, 397 residues long: Aspartate/prephenate aminotransferase (397 aa).

L-aspartate is bound by residues Gly38, Trp124, and Asn174. Lys238 bears the N6-(pyridoxal phosphate)lysine mark. Residue Arg375 coordinates L-aspartate.

Belongs to the class-I pyridoxal-phosphate-dependent aminotransferase family. Homodimer. Requires pyridoxal 5'-phosphate as cofactor.

The protein resides in the cytoplasm. It carries out the reaction L-aspartate + 2-oxoglutarate = oxaloacetate + L-glutamate. It catalyses the reaction L-arogenate + 2-oxoglutarate = prephenate + L-glutamate. Its function is as follows. Catalyzes the reversible conversion of aspartate and 2-oxoglutarate to glutamate and oxaloacetate. Can also transaminate prephenate in the presence of glutamate, with lower efficiency. This is Aspartate/prephenate aminotransferase from Nitrosomonas europaea (strain ATCC 19718 / CIP 103999 / KCTC 2705 / NBRC 14298).